The following is a 160-amino-acid chain: Major pollen allergen Bet v 1-B (160 aa).

The brassinolide site is built by Lys55, Tyr82, Tyr84, and Asn101.

The protein belongs to the BetVI family.

Its subcellular location is the cytoplasm. In terms of biological role, may be a general steroid carrier protein. This Betula pendula (European white birch) protein is Major pollen allergen Bet v 1-B (BETV1B).